The primary structure comprises 404 residues: Probable glucan endo-1,6-beta-glucosidase B (404 aa).

Residues 1 to 20 (MTTYQTLFLIPLAISTLVTA) form the signal peptide. 2 N-linked (GlcNAc...) asparagine glycosylation sites follow: Asn33 and Asn130. Glu222 serves as the catalytic Proton donor. N-linked (GlcNAc...) asparagine glycosylation is found at Asn253 and Asn299. Glu324 acts as the Nucleophile in catalysis.

Belongs to the glycosyl hydrolase 5 (cellulase A) family.

The protein resides in the secreted. It catalyses the reaction Random hydrolysis of (1-&gt;6)-linkages in (1-&gt;6)-beta-D-glucans.. Functionally, beta-glucanases participate in the metabolism of beta-glucan, the main structural component of the cell wall. Acts on lutean, pustulan and 1,6-oligo-beta-D-glucosides. The sequence is that of Probable glucan endo-1,6-beta-glucosidase B (exgB) from Aspergillus terreus (strain NIH 2624 / FGSC A1156).